The sequence spans 280 residues: Bifunctional protein FolD (280 aa).

NADP(+) is bound by residues 159–161, Ser-184, and Ile-225; that span reads GRS.

Belongs to the tetrahydrofolate dehydrogenase/cyclohydrolase family. In terms of assembly, homodimer.

The catalysed reaction is (6R)-5,10-methylene-5,6,7,8-tetrahydrofolate + NADP(+) = (6R)-5,10-methenyltetrahydrofolate + NADPH. The enzyme catalyses (6R)-5,10-methenyltetrahydrofolate + H2O = (6R)-10-formyltetrahydrofolate + H(+). It participates in one-carbon metabolism; tetrahydrofolate interconversion. Catalyzes the oxidation of 5,10-methylenetetrahydrofolate to 5,10-methenyltetrahydrofolate and then the hydrolysis of 5,10-methenyltetrahydrofolate to 10-formyltetrahydrofolate. The chain is Bifunctional protein FolD from Methanosphaerula palustris (strain ATCC BAA-1556 / DSM 19958 / E1-9c).